Reading from the N-terminus, the 386-residue chain is Acetylornithine aminotransferase (386 aa).

Pyridoxal 5'-phosphate is bound by residues 96–97 (GA) and phenylalanine 123. Arginine 126 contributes to the N(2)-acetyl-L-ornithine binding site. Position 208 to 211 (208 to 211 (DEVQ)) interacts with pyridoxal 5'-phosphate. Lysine 237 is subject to N6-(pyridoxal phosphate)lysine. Serine 265 serves as a coordination point for N(2)-acetyl-L-ornithine. A pyridoxal 5'-phosphate-binding site is contributed by threonine 266.

It belongs to the class-III pyridoxal-phosphate-dependent aminotransferase family. ArgD subfamily. As to quaternary structure, homodimer. Pyridoxal 5'-phosphate is required as a cofactor.

The protein localises to the cytoplasm. The enzyme catalyses N(2)-acetyl-L-ornithine + 2-oxoglutarate = N-acetyl-L-glutamate 5-semialdehyde + L-glutamate. Its pathway is amino-acid biosynthesis; L-arginine biosynthesis; N(2)-acetyl-L-ornithine from L-glutamate: step 4/4. This chain is Acetylornithine aminotransferase, found in Bacillus anthracis.